A 223-amino-acid polypeptide reads, in one-letter code: Ubiquitin carboxyl-terminal hydrolase isozyme L1 (223 aa).

Met1 bears the N-acetylmethionine mark. Positions 2–221 constitute a UCH catalytic domain; that stretch reads QLKPMEINPE…VRFSAVALCK (220 aa). The segment at 5–10 is interaction with ubiquitin; sequence PMEINP. Cys90 functions as the Nucleophile in the catalytic mechanism. Ser125 is subject to Phosphoserine. His161 (proton donor) is an active-site residue. An interaction with ubiquitin region spans residues 211-216; sequence EVRFSA. The S-farnesyl cysteine moiety is linked to residue Cys220. Positions 221–223 are cleaved as a propeptide — removed in mature form; that stretch reads KAA.

The protein belongs to the peptidase C12 family. In terms of assembly, monomer. Homodimer. Interacts with SNCA. Interacts with COPS5. O-glycosylated. As to expression, found in neuronal cell bodies and processes throughout the neocortex (at protein level). Expressed in neurons and cells of the diffuse neuroendocrine system and their tumors. Weakly expressed in ovary. Down-regulated in brains from Parkinson disease and Alzheimer disease patients.

It localises to the cytoplasm. The protein localises to the endoplasmic reticulum membrane. It catalyses the reaction Thiol-dependent hydrolysis of ester, thioester, amide, peptide and isopeptide bonds formed by the C-terminal Gly of ubiquitin (a 76-residue protein attached to proteins as an intracellular targeting signal).. Functionally, deubiquitinase that plays a role in the regulation of several processes such as maintenance of synaptic function, cardiac function, inflammatory response or osteoclastogenesis. Abrogates the ubiquitination of multiple proteins including WWTR1/TAZ, EGFR, HIF1A and beta-site amyloid precursor protein cleaving enzyme 1/BACE1. In addition, recognizes and hydrolyzes a peptide bond at the C-terminal glycine of ubiquitin to maintain a stable pool of monoubiquitin that is a key requirement for the ubiquitin-proteasome and the autophagy-lysosome pathways. Regulates amyloid precursor protein/APP processing by promoting BACE1 degradation resulting in decreased amyloid beta production. Plays a role in the immune response by regulating the ability of MHC I molecules to reach cross-presentation compartments competent for generating Ag-MHC I complexes. Mediates the 'Lys-48'-linked deubiquitination of the transcriptional coactivator WWTR1/TAZ leading to its stabilization and inhibition of osteoclastogenesis. Deubiquitinates and stabilizes epidermal growth factor receptor EGFR to prevent its degradation and to activate its downstream mediators. Modulates oxidative activity in skeletal muscle by regulating key mitochondrial oxidative proteins. Enhances the activity of hypoxia-inducible factor 1-alpha/HIF1A by abrogateing its VHL E3 ligase-mediated ubiquitination and consequently inhibiting its degradation. This chain is Ubiquitin carboxyl-terminal hydrolase isozyme L1 (UCHL1), found in Homo sapiens (Human).